The primary structure comprises 364 residues: Zinc transporter 3 (364 aa).

A signal peptide spans 1–23 (MGAKKHTLQVLPWLLLFAQHTAA). Over 24–44 (SACDCANTTDGADRQGAMKLK) the chain is Extracellular. Asn-30 carries N-linked (GlcNAc...) asparagine glycosylation. The helical transmembrane segment at 45–65 (LIAIASILAAGAAGVLVPVIG) threads the bilayer. Residues 66–76 (RSMAALRPDGD) lie on the Cytoplasmic side of the membrane. The chain crosses the membrane as a helical span at residues 77-97 (IFFAVKAFAAGVILATGMVHI). Residues 98–119 (LPAAFDALTSPCLKRGGGDRNP) are Extracellular-facing. A helical transmembrane segment spans residues 120–140 (FPFAGLVSMSAAVSTMVVDSL). Residues 141–213 (AAGYYHRSQF…ESIRHKVVSQ (73 aa)) are Cytoplasmic-facing. A helical membrane pass occupies residues 214–234 (VLELGILVHSVIIGVSLGASV). Residues 235–241 (RPSTIRP) are Extracellular-facing. A helical membrane pass occupies residues 242 to 262 (LVGALSFHQFFEGVGLGGCIV). Residues 263–271 (QANFKVRAT) are Cytoplasmic-facing. Residues 272-292 (VIMAIFFSLTAPVGIVLGIAI) form a helical membrane-spanning segment. At 293–303 (SSSYNVHSSTA) the chain is on the extracellular side. Residues 304 to 324 (FVVEGVFNSASAGILIYMSLV) traverse the membrane as a helical segment. At 325–343 (DLLATDFNNPKLQINTKLQ) the chain is on the cytoplasmic side. A helical membrane pass occupies residues 344 to 364 (LMAYLALFLGAGLMSMLAIWA).

It belongs to the ZIP transporter (TC 2.A.5) family. As to expression, expressed in vascular bundles of stems.

The protein localises to the cell membrane. In terms of biological role, zinc transporter that may mediate zinc uptake from the rhizosphere. Seems specific to zinc ions and may not transport other divalent cations. This is Zinc transporter 3 (ZIP3) from Oryza sativa subsp. japonica (Rice).